Consider the following 160-residue polypeptide: Radiation-inducible immediate-early gene IEX-1 (160 aa).

A disordered region spans residues 1–35; that stretch reads MCHSRNHLHTMTGLRAPSPAPSTGPELRRGSGPEI. Residues 1 to 85 are Cytoplasmic-facing; it reads MCHSRNHLHT…PTEEPNIAKR (85 aa). S31 is modified (phosphoserine). A helical; Signal-anchor for type II membrane protein transmembrane segment spans residues 86–102; it reads VLFLLFAIIFCQILMAE. Residues 103-153 are Extracellular-facing; sequence EGVSQPLAPEDATSAVTPEPISAPITAPPVLEPLNLTSESSDYALDLKAFL. The N-linked (GlcNAc...) asparagine glycan is linked to N137.

The protein belongs to the IER3 family. As to quaternary structure, interacts with the PPP2R5C-PP2A holoenzyme and ERK kinases; regulates ERK dephosphorylation. Post-translationally, glycosylated. As to expression, expressed predominantly in the lung, testes and the uterus.

It localises to the membrane. Functionally, may play a role in the ERK signaling pathway by inhibiting the dephosphorylation of ERK by phosphatase PP2A-PPP2R5C holoenzyme. Also acts as an ERK downstream effector mediating survival. As a member of the NUPR1/RELB/IER3 survival pathway, may allow the development of pancreatic intraepithelial neoplasias. This chain is Radiation-inducible immediate-early gene IEX-1 (Ier3), found in Mus musculus (Mouse).